Reading from the N-terminus, the 150-residue chain is Aspartate 1-decarboxylase 1 (150 aa).

The active-site Schiff-base intermediate with substrate; via pyruvic acid is the Ser24. Pyruvic acid (Ser) is present on Ser24. A substrate-binding site is contributed by Thr56. The Proton donor role is filled by Tyr57. Position 72–74 (72–74 (GAA)) interacts with substrate.

This sequence belongs to the PanD family. As to quaternary structure, heterooctamer of four alpha and four beta subunits. Requires pyruvate as cofactor. Post-translationally, is synthesized initially as an inactive proenzyme, which is activated by self-cleavage at a specific serine bond to produce a beta-subunit with a hydroxyl group at its C-terminus and an alpha-subunit with a pyruvoyl group at its N-terminus.

It is found in the cytoplasm. It carries out the reaction L-aspartate + H(+) = beta-alanine + CO2. It functions in the pathway cofactor biosynthesis; (R)-pantothenate biosynthesis; beta-alanine from L-aspartate: step 1/1. In terms of biological role, catalyzes the pyruvoyl-dependent decarboxylation of aspartate to produce beta-alanine. The polypeptide is Aspartate 1-decarboxylase 1 (Mesorhizobium japonicum (strain LMG 29417 / CECT 9101 / MAFF 303099) (Mesorhizobium loti (strain MAFF 303099))).